The sequence spans 1064 residues: MVKQLQEQEENDPVEKTKSLISALNYLSRDLLLPSHLYASVSSIYHASVSDLSPSPPLRGNSYTPNRGDLMSEFEDALLQQRLNYESGSRLAELKETRYKNRIHNRLSQLEGLPSNRGEDLQEKCLLELYGLKLQELQCRVRGEVSAEYWLRLNCADPERQLYDWGMMRLPRRMYGVGDSFVMEADDQFRNKRDAERLLRLEEEEKNLIETTQRKFFAEVLNAVREFQLQIQASHRRCKQRNDGVQAWHGKQRQRATRAEKLRIMALKSDDQEEYMKLAKESKNEKLTLFLEETNKIFVSLGAAVQRQKDAKLSENTKLLKGSESDLSDVDAPEDVLPAQDIEIIDSDNNDDSNDLLEGERQFNLAIHSIQEKVTKQPSLLQGGELRSYQLEGLQWMVSLYNNDYNGILADEMGLGKTIQTIALIAYLLESKDLHGPHLILAPKAVLPNWENEFALWAPSISAFLYDGSKEKRTEIRARIAGGKFNVLITHYDLIMRDKAFLKKIDWNYMIVDEGHRLKNHECALAKTLGTGYRIKRRLLLTGTPIQNSLQELWSLLNFLLPHIFNSIHNFEEWFNTPFAECGSASLTDEEELLIINRLHHVIRPFLLRRKKSEVEKFLPGKTQVILKCDMSAWQKLYYKQVTDVGRVGLHSGNGKSKSLQNLTMQLRKCCNHPYLFVGADYNMCKKPEIVRASGKFELLDRLLPKLKKAGHRILLFSQMTRLIDLLEIYLSLNDYMYLRLDGSTKTDQRGILLKQFNEPDSPYFMFLLSTRAGGLGLNLQTADTIIIFDSDWNPQMDQQAEDRAHRIGQKKEVRVFVLVSIGSIEEVILERAKQKMGIDAKVIQAGLFNTTSTAQDRREMLEEIMSKGTSSLGEDVPSEREINRLAARTEEEFWMFEQMDEERRKKENYKTRLMEEKEVPEWAYTSETQEDKTNAKNHFGSLTGKRKRKEAVYSDSLSDLQWMKAMESEDEDASKVSQKRKRTDTKTRMSNGSKAEAVLSESDEEKEEEEEERKEESGKESEEENEKPLHSWKTNKKKRSRYPVMTSSPNSRGKGSSKGSKRN.

One can recognise a Helicase ATP-binding domain in the interval 398–563 (VSLYNNDYNG…WSLLNFLLPH (166 aa)). 411–418 (DEMGLGKT) contacts ATP. Residues 513-516 (DEGH) carry the DEAH box motif. In terms of domain architecture, Helicase C-terminal spans 699-866 (LLDRLLPKLK…DRREMLEEIM (168 aa)). Disordered regions lie at residues 924-955 (AYTS…AVYS) and 967-1064 (MESE…SKRN). The segment covering 1002–1014 (ESDEEKEEEEEER) has biased composition (acidic residues). The segment covering 1048–1064 (SSPNSRGKGSSKGSKRN) has biased composition (low complexity).

The protein belongs to the helicase family. Expressed in embryos, root apical meristem (RAM) and shoot apical meristem (SAM).

It is found in the nucleus. It catalyses the reaction ATP + H2O = ADP + phosphate + H(+). Functionally, probable chromatin-remodeling factor that is functionally redundant with CHR12 in root and shoot stem cell initiation and root apical meristem (RAM) and shoot apical meristem (SAM) maintenance. Can associate with the promoter region of WOX5. May promote seed maturation and repress initiation of germination. May repress plant growth. This chain is Probable ATP-dependent DNA helicase CHR23, found in Arabidopsis thaliana (Mouse-ear cress).